We begin with the raw amino-acid sequence, 467 residues long: Nuclear distribution protein nudF 1 (467 aa).

A LisH domain is found at 9–41; sequence QAEELHKSIIAYLASVNLSESATTLRAELGDAV. Residues 60 to 87 are a coiled coil; sequence TSVVRLQKKIMDLESRCAALQSELDSAT. 8 WD repeats span residues 113–154, 156–196, 200–247, 250–289, 292–352, 354–393, 398–428, and 429–466; these read SHRS…RTVK, HTKA…KNIR, GHDH…CVKT, GHVDWVRAVAPSIDGRFLFAAGDDRIPRLWDLSAAETRST, GHEH…IKTL, GHDNWVRALAFHPGGKYLLSVSDDKTIRCWDLTQECKCVR, THEHFVTCLRWAPPLIKDSGANGDAGANGTP, and AATTTSNGARQDPNAANKISIRCVIATGSVDQKVRVFA. The span at 417–437 shows a compositional bias: low complexity; the sequence is GANGDAGANGTPAATTTSNGA. The disordered stretch occupies residues 417 to 441; sequence GANGDAGANGTPAATTTSNGARQDP.

It belongs to the WD repeat LIS1/nudF family. Self-associates. Interacts with nudE and dynein.

The protein resides in the cytoplasm. The protein localises to the cytoskeleton. Its subcellular location is the spindle pole. Positively regulates the activity of the minus-end directed microtubule motor protein dynein. May enhance dynein-mediated microtubule sliding by targeting dynein to the microtubule plus end. Required for nuclear migration during vegetative growth as well as development. Required for retrograde early endosome (EE) transport from the hyphal tip. Required for localization of dynein to the mitotic spindle poles. Recruits additional proteins to the dynein complex at SPBs. This chain is Nuclear distribution protein nudF 1, found in Aspergillus clavatus (strain ATCC 1007 / CBS 513.65 / DSM 816 / NCTC 3887 / NRRL 1 / QM 1276 / 107).